Here is a 118-residue protein sequence, read N- to C-terminus: Large ribosomal subunit protein bL20 (118 aa).

It belongs to the bacterial ribosomal protein bL20 family.

Its function is as follows. Binds directly to 23S ribosomal RNA and is necessary for the in vitro assembly process of the 50S ribosomal subunit. It is not involved in the protein synthesizing functions of that subunit. The sequence is that of Large ribosomal subunit protein bL20 from Pectobacterium atrosepticum (strain SCRI 1043 / ATCC BAA-672) (Erwinia carotovora subsp. atroseptica).